The following is a 255-amino-acid chain: MRRHSTRKTVARVAVVALAVGVLAGCNTFKRLSEIGDGPAMSGVDNPTLRPDYRPVSMPMPAPMVAEPNPSSLWVPGARSFFKDQRAGEVGDLLTVIVDISNEKATFANNLSRTRGNKEGANLTSFLGFEGTLADVLPDGVDPASLTSFGSDSKHTGNGSMARSETVSMRLAAVVLQILPNGNFVIAGKQEVRVNGELRELTVTGVIRPEDIRSDNTIFWHQIAEARISYGGRGTVTDMVEPRYGQQVYDILFPF.

Positions 1-25 (MRRHSTRKTVARVAVVALAVGVLAG) are cleaved as a signal peptide. Residue C26 is the site of N-palmitoyl cysteine attachment. C26 is lipidated: S-diacylglycerol cysteine.

The protein belongs to the FlgH family. As to quaternary structure, the basal body constitutes a major portion of the flagellar organelle and consists of four rings (L,P,S, and M) mounted on a central rod.

The protein resides in the cell outer membrane. Its subcellular location is the bacterial flagellum basal body. Functionally, assembles around the rod to form the L-ring and probably protects the motor/basal body from shearing forces during rotation. In Rhodospirillum rubrum (strain ATCC 11170 / ATH 1.1.1 / DSM 467 / LMG 4362 / NCIMB 8255 / S1), this protein is Flagellar L-ring protein.